A 140-amino-acid polypeptide reads, in one-letter code: MPTINQLVRKGRQSKVVKSDSPALNKGYNSFIKARTDISSPQKRGVCTRVGTMTPKKPNSALRKYARVRLTNTMEVTAYIPGIGHNLQEHSVVLIRGGRVKDLPGVRYHIVRGALDTAGVDGRMQGRSKYGTKRPKAAKK.

The disordered stretch occupies residues 1-20 (MPTINQLVRKGRQSKVVKSD). Asp-102 carries the 3-methylthioaspartic acid modification. The interval 121–140 (DGRMQGRSKYGTKRPKAAKK) is disordered. Basic residues predominate over residues 130 to 140 (YGTKRPKAAKK).

It belongs to the universal ribosomal protein uS12 family. As to quaternary structure, part of the 30S ribosomal subunit. Contacts proteins S8 and S17. May interact with IF1 in the 30S initiation complex.

Functionally, with S4 and S5 plays an important role in translational accuracy. Its function is as follows. Interacts with and stabilizes bases of the 16S rRNA that are involved in tRNA selection in the A site and with the mRNA backbone. Located at the interface of the 30S and 50S subunits, it traverses the body of the 30S subunit contacting proteins on the other side and probably holding the rRNA structure together. The combined cluster of proteins S8, S12 and S17 appears to hold together the shoulder and platform of the 30S subunit. The protein is Small ribosomal subunit protein uS12 of Exiguobacterium sibiricum (strain DSM 17290 / CCUG 55495 / CIP 109462 / JCM 13490 / 255-15).